A 789-amino-acid chain; its full sequence is DEAD-box ATP-dependent RNA helicase 28 (789 aa).

The tract at residues 1–152 (MPSSFFFEDA…AEYKPEDATP (152 aa)) is disordered. Positions 13–66 (DELELIRNQEDSSEEDVKEGEAEEHEAGEDEDGEEEYEEEDDDEEEEDEKRKRD) form a coiled coil. Positions 23–60 (DSSEEDVKEGEAEEHEAGEDEDGEEEYEEEDDDEEEED) are enriched in acidic residues. Residues 83 to 99 (GEEHARRHTTSIDEKIS) show a composition bias toward basic and acidic residues. The stretch at 110–135 (SINEEEEEEEEEEDASDAETDKQEEY) forms a coiled coil. Positions 112-127 (NEEEEEEEEEEDASDA) are enriched in acidic residues. The short motif at 167–195 (DTFMELNLSRPLLRACETLGYKKPTPIQA) is the Q motif element. Residues 198–372 (IPLALTGRDL…KLSLNKPLRL (175 aa)) enclose the Helicase ATP-binding domain. 211-218 (AITGSGKT) lines the ATP pocket. A DEAD box motif is present at residues 320–323 (DEAD). In terms of domain architecture, Helicase C-terminal spans 402–546 (VLLSLCTRTF…SRVIPEQSIV (145 aa)). Coiled-coil stretches lie at residues 563–591 (ISAE…HRDE) and 628–677 (SADR…EDEE). The disordered stretch occupies residues 611 to 789 (AQAEKDSAGN…FKSKARYKRR (179 aa)). Residues 628 to 637 (SADRAEDLKM) are compositionally biased toward basic and acidic residues. Over residues 638–656 (KEKRKREREKNLPRKKRRK) the composition is skewed to basic residues. Residues 665-678 (EDNEGEEEEEDEEG) show a composition bias toward acidic residues. Composition is skewed to basic and acidic residues over residues 691 to 701 (KKQETDKKGLT), 718 to 734 (RAID…DKKQ), and 743 to 761 (PRGE…EKKQ). A compositionally biased stretch (basic residues) spans 772–789 (PRTKSKNSFKSKARYKRR).

The protein belongs to the DEAD box helicase family. DDX27/DRS1 subfamily.

It carries out the reaction ATP + H2O = ADP + phosphate + H(+). The polypeptide is DEAD-box ATP-dependent RNA helicase 28 (RH28) (Arabidopsis thaliana (Mouse-ear cress)).